The following is a 448-amino-acid chain: Homogentisate 1,2-dioxygenase (448 aa).

The tract at residues 1–26 is disordered; it reads MNMLAPAAKNAFTPASPDRPAYQSGF. His302 (proton acceptor) is an active-site residue. Positions 345 and 351 each coordinate Fe cation. Homogentisate contacts are provided by Tyr360 and His381. His381 contributes to the Fe cation binding site.

Belongs to the homogentisate dioxygenase family. In terms of assembly, hexamer; dimer of trimers. Fe cation serves as cofactor.

It carries out the reaction homogentisate + O2 = 4-maleylacetoacetate + H(+). It functions in the pathway amino-acid degradation; L-phenylalanine degradation; acetoacetate and fumarate from L-phenylalanine: step 4/6. Its function is as follows. Involved in the catabolism of homogentisate (2,5-dihydroxyphenylacetate or 2,5-OH-PhAc), a central intermediate in the degradation of phenylalanine and tyrosine. Catalyzes the oxidative ring cleavage of the aromatic ring of homogentisate to yield maleylacetoacetate. In Ralstonia nicotianae (strain ATCC BAA-1114 / GMI1000) (Ralstonia solanacearum), this protein is Homogentisate 1,2-dioxygenase.